Consider the following 191-residue polypeptide: MANVSIHPAVDGGVVHGSTEGFAGGTLQCLCASNKVTVDVASQSAHNHACGCSKCWKPEGAKFSVVAVAPRDKVTVTAHPEKLKIVDESATIQRHACTGCGVHLYGRIENKDHAFYGLDFIHTELSQQSGWSPPGFAAFVSSIIETGTPPDQMDGVRARLTELGLTPYDCLSPALMDALSTNVARHKGLLH.

The 148-residue stretch at 22–169 (FAGGTLQCLC…LTELGLTPYD (148 aa)) folds into the CENP-V/GFA domain. Zn(2+) is bound by residues cysteine 29, cysteine 31, cysteine 50, cysteine 52, cysteine 55, cysteine 97, and cysteine 100.

This sequence belongs to the Gfa family. Zn(2+) is required as a cofactor.

It carries out the reaction S-(hydroxymethyl)glutathione = glutathione + formaldehyde. It participates in one-carbon metabolism; formaldehyde degradation; formate from formaldehyde (glutathione route): step 1/3. Catalyzes the condensation of formaldehyde and glutathione to S-hydroxymethylglutathione. In Xanthomonas campestris pv. campestris (strain 8004), this protein is Glutathione-dependent formaldehyde-activating enzyme.